A 431-amino-acid polypeptide reads, in one-letter code: RNA-binding motif, single-stranded-interacting protein 3 (431 aa).

The segment at 28-53 (YAPAPHPMAPPSPSTNSSSNSSGEQL) is disordered. Residues 31–40 (APHPMAPPSP) show a composition bias toward pro residues. 2 RRM domains span residues 56–129 (TNLY…MAKQ) and 135–220 (TNLY…FADG). 2 disordered regions span residues 220-242 (GGQKKRQGQSKHTQNGRPWPREG) and 393-431 (TSPQTVAPSSQDSSGQQQQLAVDTPSEHAPAYSFQQSKP). Residues 401–411 (SSQDSSGQQQQ) show a composition bias toward low complexity.

It localises to the cytoplasm. In terms of biological role, binds poly(A) and poly(U) oligoribonucleotides. The protein is RNA-binding motif, single-stranded-interacting protein 3 (Rbms3) of Mus musculus (Mouse).